A 338-amino-acid chain; its full sequence is Isopenicillin N synthase (338 aa).

Residues Arg-89, Tyr-93, Ser-185, and Tyr-191 each contribute to the isopenicillin N site. Positions 89, 93, 185, 191, 216, and 218 each coordinate N-[(5S)-5-amino-5-carboxypentanoyl]-L-cysteinyl-D-valine. The 109-residue stretch at Thr-182–Leu-290 folds into the Fe2OG dioxygenase domain. Fe(2+) contacts are provided by His-216, Asp-218, and His-272. Arg-281 contributes to the 2-oxoglutarate binding site. Residue Ser-283 coordinates isopenicillin N. Ser-283 provides a ligand contact to N-[(5S)-5-amino-5-carboxypentanoyl]-L-cysteinyl-D-valine.

The protein belongs to the iron/ascorbate-dependent oxidoreductase family. As to quaternary structure, monomer. It depends on Fe(2+) as a cofactor.

The protein resides in the cytoplasm. The protein localises to the cytosol. The enzyme catalyses N-[(5S)-5-amino-5-carboxypentanoyl]-L-cysteinyl-D-valine + O2 = isopenicillin N + 2 H2O. The protein operates within antibiotic biosynthesis; penicillin G biosynthesis; penicillin G from L-alpha-aminoadipate and L-cysteine and L-valine: step 2/3. In terms of biological role, isopenicillin N synthase; part of the gene cluster that mediates the biosynthesis of penicillin, the world's most important antibiotic. IpnA catalyzes the cyclization of the tripeptide N-[(5S)-5-amino-5-carboxypentanoyl]-L-cysteinyl-D-valine (LLD-ACV or ACV) to form isopenicillin N (IPN) that contains the beta-lactam nucleus. The penicillin biosynthesis occurs via 3 enzymatic steps, the first corresponding to the production of the tripeptide N-[(5S)-5-amino-5-carboxypentanoyl]-L-cysteinyl-D-valine (LLD-ACV or ACV) by the NRPS pcbAB. The tripeptide ACV is then cyclized to isopenicillin N (IPN) by the isopenicillin N synthase pcbC that forms the beta-lactam nucleus. Finally, the alpha-aminoadipyl side chain is exchanged for phenylacetic acid by the isopenicillin N acyltransferase penDE to yield penicillin in the peroxisomal matrix. This is Isopenicillin N synthase (PCBC) from Hapsidospora chrysogena (Acremonium chrysogenum).